The chain runs to 548 residues: Sterol esterase TGL1 (548 aa).

N-acetylmethionine; partial is present on Met-1. The Lumenal portion of the chain corresponds to 1 to 13; that stretch reads MYFPFLGRLSITD. Residues 14–34 form a helical membrane-spanning segment; that stretch reads YIIVVLVYIESIISSVLKLIP. Residues 35-548 lie on the Cytoplasmic side of the membrane; sequence QPMINLFEWL…TTALDALNKE (514 aa). The AB hydrolase-1 domain maps to 107–402; sequence VVYLHHGLLM…NYEHLDLIWG (296 aa). Positions 199-203 match the GXSXG motif; sequence GFSQG. The active-site Nucleophile is the Ser-201. A Glycyl lysine isopeptide (Lys-Gly) (interchain with G-Cter in ubiquitin) cross-link involves residue Lys-246. Active-site charge relay system residues include Asp-369 and His-396. Disordered stretches follow at residues 449 to 477 and 496 to 516; these read TTHP…EADE and IDED…HKEQ. Residues Ser-462 and Ser-466 each carry the phosphoserine modification. Residues 502 to 516 are compositionally biased toward basic and acidic residues; sequence NEHQDDTEDQIHKEQ. Residues Ser-521 and Ser-538 each carry the phosphoserine modification. The segment at 528-548 is disordered; sequence KDLRQLDANSSTTALDALNKE. Thr-539 is subject to Phosphothreonine.

This sequence belongs to the AB hydrolase superfamily. In terms of processing, not N-glycosylated.

Its subcellular location is the lipid droplet. It is found in the membrane. The catalysed reaction is a sterol ester + H2O = a sterol + a fatty acid + H(+). Mediates the hydrolysis of steryl esters (SE). Preferentially hydrolyzes ergosteryl and zymosteryl esters. Required for mobilization of SEs from lipid particles/droplets, thereby playing a central role in lipid metabolism and sterol homeostasis. Sterol intermediates stored in SE and set free by SE hydrolases are recycled to the sterol biosynthetic pathway and converted to the final product, ergosterol, in the endoplasmic reticulum. Also has weak lipase activity toward triglycerides at neutral pH, however, the physiological relevance of this activity is unclear. The protein is Sterol esterase TGL1 (TGL1) of Saccharomyces cerevisiae (strain ATCC 204508 / S288c) (Baker's yeast).